Here is a 55-residue protein sequence, read N- to C-terminus: Ovomucoid (55 aa).

Residues 5–55 (VDCSEHPKPACTLDYRPICGSDSKTYSNKCDFCNAVMDSNGTLTLSHFGKC) enclose the Kazal-like domain. 3 disulfide bridges follow: Cys7–Cys37, Cys15–Cys34, and Cys23–Cys55. Asn44 carries N-linked (GlcNAc...) asparagine glycosylation.

The protein localises to the secreted. In Dacelo novaeguineae (Laughing kookaburra), this protein is Ovomucoid.